Here is a 357-residue protein sequence, read N- to C-terminus: Fulicin peptides (357 aa).

Residues Met-1 to Gln-17 form the signal peptide. Residues Val-18–Pro-119 constitute a propeptide that is removed on maturation. Asn-123 carries the post-translational modification D-asparagine. A Valine amide modification is found at Val-126. A propeptide spanning residues Asn-130–Ser-194 is cleaved from the precursor. 2 positions are modified to valine amide: Val-201 and Val-209. 2 positions are modified to leucine amide: Leu-217 and Leu-226. Isoleucine amide is present on residues Ile-233 and Ile-242. Val-250 and Val-259 each carry valine amide. Residues Asn-263–Asn-298 constitute a propeptide that is removed on maturation. Leu-305 bears the Leucine amide mark. Positions Thr-311–Lys-357 are excised as a propeptide.

Found in central ganglia and the ventricles and atria of the heart.

In terms of biological role, potentiates tetanic contraction of the penis retractor muscle at very low concentrations, and also shows modulatory actions on the activity of the buccal and ventricular muscles and the central ganglionic neurons. In Lissachatina fulica (Giant African land snail), this protein is Fulicin peptides.